The following is an 804-amino-acid chain: Phenylalanine--tRNA ligase beta subunit (804 aa).

The tRNA-binding domain maps to 39–155; the sequence is AEGLKKIVVG…ADVKPGEEVY (117 aa). One can recognise a B5 domain in the interval 408–483; that stretch reads RNPSVVKTTV…RIYGYDNLKS (76 aa). Mg(2+)-binding residues include aspartate 461, aspartate 467, glutamate 470, and glutamate 471. Residues 711–804 enclose the FDX-ACB domain; sequence PKFPAIERDL…LKESLKIKVR (94 aa).

This sequence belongs to the phenylalanyl-tRNA synthetase beta subunit family. Type 1 subfamily. Tetramer of two alpha and two beta subunits. It depends on Mg(2+) as a cofactor.

The protein resides in the cytoplasm. The catalysed reaction is tRNA(Phe) + L-phenylalanine + ATP = L-phenylalanyl-tRNA(Phe) + AMP + diphosphate + H(+). This Lactobacillus johnsonii (strain CNCM I-12250 / La1 / NCC 533) protein is Phenylalanine--tRNA ligase beta subunit.